The chain runs to 319 residues: Putative peptide permease protein BRA0408/BS1330_II0405 (319 aa).

Helical transmembrane passes span 9-29, 102-122, 138-158, 182-202, 242-262, and 284-304; these read LLIG…LLQL, LLLM…TGII, LALL…LYVF, LLRH…ALIM, LPVV…AIFI, and YPVI…VNIL. The region spanning 98-305 is the ABC transmembrane type-1 domain; sequence IGPTLLLMAA…ACVIIVNILT (208 aa).

It belongs to the binding-protein-dependent transport system permease family. As to quaternary structure, the complex is composed of two ATP-binding proteins (BRA0404 and BRA0405), two transmembrane proteins (BRA0407 and BRA0408) and a solute-binding protein (BRA0409).

The protein localises to the cell inner membrane. Probably part of an ABC transporter complex that could be involved in peptide import. Probably responsible for the translocation of the substrate across the membrane. The sequence is that of Putative peptide permease protein BRA0408/BS1330_II0405 from Brucella suis biovar 1 (strain 1330).